The sequence spans 506 residues: Kynurenine 3-monooxygenase (506 aa).

The segment at 153-174 is disordered; it reads QETSLLPGEESEKDKKQNTEDE. Residues 162–171 show a composition bias toward basic and acidic residues; that stretch reads ESEKDKKQNT.

This sequence belongs to the aromatic-ring hydroxylase family. KMO subfamily. FAD is required as a cofactor.

It localises to the mitochondrion outer membrane. The catalysed reaction is L-kynurenine + NADPH + O2 + H(+) = 3-hydroxy-L-kynurenine + NADP(+) + H2O. It functions in the pathway cofactor biosynthesis; NAD(+) biosynthesis; quinolinate from L-kynurenine: step 1/3. Its function is as follows. Catalyzes the hydroxylation of L-kynurenine (L-Kyn) to form 3-hydroxy-L-kynurenine (L-3OHKyn). Required for synthesis of quinolinic acid. The chain is Kynurenine 3-monooxygenase from Cryptococcus neoformans var. neoformans serotype D (strain JEC21 / ATCC MYA-565) (Filobasidiella neoformans).